We begin with the raw amino-acid sequence, 279 residues long: Phosphatidylglycerol--prolipoprotein diacylglyceryl transferase (279 aa).

Transmembrane regions (helical) follow at residues 18–38 (LSVR…YFVA), 55–75 (IIFY…VIFQ), and 89–109 (IWHG…AGVI). A 1,2-diacyl-sn-glycero-3-phospho-(1'-sn-glycerol) is bound at residue R137. 2 helical membrane passes run 203-223 (LGET…FIEG) and 235-255 (IRVA…LIVY).

This sequence belongs to the Lgt family.

The protein localises to the cell membrane. It catalyses the reaction L-cysteinyl-[prolipoprotein] + a 1,2-diacyl-sn-glycero-3-phospho-(1'-sn-glycerol) = an S-1,2-diacyl-sn-glyceryl-L-cysteinyl-[prolipoprotein] + sn-glycerol 1-phosphate + H(+). It participates in protein modification; lipoprotein biosynthesis (diacylglyceryl transfer). Catalyzes the transfer of the diacylglyceryl group from phosphatidylglycerol to the sulfhydryl group of the N-terminal cysteine of a prolipoprotein, the first step in the formation of mature lipoproteins. The sequence is that of Phosphatidylglycerol--prolipoprotein diacylglyceryl transferase from Staphylococcus aureus (strain MSSA476).